Consider the following 362-residue polypeptide: Probable secreted beta-glucosidase UTH1 (362 aa).

An N-terminal signal peptide occupies residues Met1–Ala17.

The protein belongs to the SUN family.

Its subcellular location is the mitochondrion outer membrane. It is found in the secreted. The protein localises to the cell wall. Functionally, involved in aging, oxidative stress response, and in the regulation of mitochondrial biogenesis. Inactivation of UTH1 increases life span, leads to higher resistance to heat stress and to hydrogen peroxide, and increases sensitivity to the superoxide radical-generating drug paraquat and to copper. Also required for the selective autophagic degradation of mitochondria (mitophagy) in response to nitrogen starvation. Involved in the remodeling of the cell wall during the various phases of yeast culture development and under various environmental conditions and plays a role in septation. Involved in cell sensitivity to boric acid. This is Probable secreted beta-glucosidase UTH1 (UTH1) from Saccharomyces cerevisiae (strain RM11-1a) (Baker's yeast).